Here is a 461-residue protein sequence, read N- to C-terminus: Deoxyhypusine synthase (461 aa).

Residues Glu-166–His-167, Glu-331, His-377, Gly-403–Asp-405, and Glu-412–Lys-418 each bind spermidine. The active-site Nucleophile is Lys-418. The chain crosses the membrane as a helical span at residues Val-428–Val-448.

It belongs to the deoxyhypusine synthase family. Heterotetramer formed by a homodimer of the non-catalytic regulatory subunit DHSp and a homodimer of the catalytic subunit DHSc where DHSc appears to bind spermidine and DHSp appears to bind NAD(+). It depends on NAD(+) as a cofactor.

The protein localises to the membrane. It carries out the reaction [eIF5A protein]-L-lysine + spermidine = [eIF5A protein]-deoxyhypusine + propane-1,3-diamine. The protein operates within protein modification; eIF5A hypusination. Allosterically activated by DHSp. Inhibited by spermididine analog N1-guanyl-1,7-diamineoheptane (GC7). Its function is as follows. In association with the non-catalytic regulatory subunit DHSp, catalyzes the NAD-dependent oxidative cleavage of spermidine and the subsequent transfer of the butylamine moiety of spermidine to the epsilon-amino group of a specific lysine residue of the eIF5A precursor protein to form the intermediate deoxyhypusine residue. Regulates protein levels of its regulatory subunit DHSp. Required for cell growth and survival. In Trypanosoma brucei brucei (strain 927/4 GUTat10.1), this protein is Deoxyhypusine synthase.